Here is a 572-residue protein sequence, read N- to C-terminus: Methionine--tRNA ligase (572 aa).

The 'HIGH' region motif lies at 11–21; it reads PYINGIKHLGN. The Zn(2+) site is built by Cys-143, Cys-146, Cys-156, and Cys-159. The 'KMSKS' region signature appears at 346-350; that stretch reads QFSTS. Residue Thr-349 coordinates ATP.

The protein belongs to the class-I aminoacyl-tRNA synthetase family. MetG type 1 subfamily. In terms of assembly, monomer. The cofactor is Zn(2+).

The protein localises to the cytoplasm. It catalyses the reaction tRNA(Met) + L-methionine + ATP = L-methionyl-tRNA(Met) + AMP + diphosphate. In terms of biological role, is required not only for elongation of protein synthesis but also for the initiation of all mRNA translation through initiator tRNA(fMet) aminoacylation. In Dinoroseobacter shibae (strain DSM 16493 / NCIMB 14021 / DFL 12), this protein is Methionine--tRNA ligase.